Reading from the N-terminus, the 260-residue chain is Ribosomal RNA small subunit methyltransferase J (260 aa).

Residues 125–126 (ER) and D179 each bind S-adenosyl-L-methionine.

It belongs to the methyltransferase superfamily. RsmJ family.

It localises to the cytoplasm. It catalyses the reaction guanosine(1516) in 16S rRNA + S-adenosyl-L-methionine = N(2)-methylguanosine(1516) in 16S rRNA + S-adenosyl-L-homocysteine + H(+). Specifically methylates the guanosine in position 1516 of 16S rRNA. The protein is Ribosomal RNA small subunit methyltransferase J of Pseudomonas entomophila (strain L48).